The primary structure comprises 224 residues: Protein LURP-one-related 1 (224 aa).

Positions 1–23 are disordered; sequence MQQPYEYRYPQGTGPSAPPPPPK.

Belongs to the LOR family.

In terms of biological role, might be related to the phospholipid scramblase and tubby-like superfamily of membrane tethered transcription factors. The polypeptide is Protein LURP-one-related 1 (Arabidopsis thaliana (Mouse-ear cress)).